A 546-amino-acid chain; its full sequence is Chaperonin GroEL (546 aa).

ATP-binding positions include 30-33 (TLGP), Lys-51, 87-91 (DGTTT), Gly-415, and Asp-496. Residues 526-546 (PEPKSAPAGGMGGMGGMDGMM) are disordered. Positions 534–546 (GGMGGMGGMDGMM) are enriched in gly residues.

This sequence belongs to the chaperonin (HSP60) family. In terms of assembly, forms a cylinder of 14 subunits composed of two heptameric rings stacked back-to-back. Interacts with the co-chaperonin GroES.

Its subcellular location is the cytoplasm. The catalysed reaction is ATP + H2O + a folded polypeptide = ADP + phosphate + an unfolded polypeptide.. Functionally, together with its co-chaperonin GroES, plays an essential role in assisting protein folding. The GroEL-GroES system forms a nano-cage that allows encapsulation of the non-native substrate proteins and provides a physical environment optimized to promote and accelerate protein folding. This chain is Chaperonin GroEL, found in Rhodopseudomonas palustris.